The chain runs to 120 residues: Large ribosomal subunit protein uL22 (120 aa).

A disordered region spans residues 1–25 (MFVNKKYTAKGKNLPSSPKKVRPIA).

Belongs to the universal ribosomal protein uL22 family. Part of the 50S ribosomal subunit.

Its function is as follows. This protein binds specifically to 23S rRNA; its binding is stimulated by other ribosomal proteins, e.g. L4, L17, and L20. It is important during the early stages of 50S assembly. It makes multiple contacts with different domains of the 23S rRNA in the assembled 50S subunit and ribosome. The globular domain of the protein is located near the polypeptide exit tunnel on the outside of the subunit, while an extended beta-hairpin is found that lines the wall of the exit tunnel in the center of the 70S ribosome. In Borrelia duttonii (strain Ly), this protein is Large ribosomal subunit protein uL22.